Here is a 233-residue protein sequence, read N- to C-terminus: Synaptogyrin-4 (233 aa).

In terms of domain architecture, MARVEL spans 18 to 169 (FLRRPKSISR…QAYLAFQDLR (152 aa)). The next 4 membrane-spanning stretches (helical) occupy residues 25–45 (ISRI…LTDG), 66–86 (CSFA…FLAI), 104–124 (LLDF…FCFL), and 145–165 (AAIA…YLAF). The interval 191–233 (SPSSTSPSNPPITGPNSLSYTSSALSPYMTTPKAPRLAMMPDS) is disordered. The segment covering 204 to 219 (GPNSLSYTSSALSPYM) has biased composition (polar residues).

Belongs to the synaptogyrin family.

It localises to the membrane. The sequence is that of Synaptogyrin-4 (Syngr4) from Mus musculus (Mouse).